The chain runs to 266 residues: 15-hydroxyprostaglandin dehydrogenase [NAD(+)] (266 aa).

Residues G12–A20, D36–W37, C63–V65, and N91 contribute to the NAD(+) site. S138 and Q148 together coordinate substrate. Y151 acts as the Proton acceptor in catalysis. NAD(+)-binding positions include Y151 to K155 and V186 to T188.

The protein belongs to the short-chain dehydrogenases/reductases (SDR) family. As to quaternary structure, homodimer.

Its subcellular location is the cytoplasm. The catalysed reaction is prostaglandin E2 + NAD(+) = 15-oxoprostaglandin E2 + NADH + H(+). It carries out the reaction (15S)-hydroxy-(5Z,8Z,11Z,13E)-eicosatetraenoate + NAD(+) = 15-oxo-(5Z,8Z,11Z,13E)-eicosatetraenoate + NADH + H(+). The enzyme catalyses (11R)-hydroxy-(5Z,8Z,12E,14Z)-eicosatetraenoate + NAD(+) = 11-oxo-(5Z,8Z,12E,14Z)-eicosatetraenoate + NADH + H(+). It catalyses the reaction lipoxin A4 + NAD(+) = 15-oxo-(5S,6R)-dihydroxy-(7E,9E,11Z,13E)-eicosatetraenoate + NADH + H(+). The catalysed reaction is 15-oxo-(5S,6R)-dihydroxy-(7E,9E,11Z)-eicosatrienoate + NADH + H(+) = (5S,6R,15S)-trihydroxy-(7E,9E,11Z)-eicosatrienoate + NAD(+). It carries out the reaction prostaglandin A1 + NAD(+) = 15-oxo-prostaglandin A1 + NADH + H(+). The enzyme catalyses prostaglandin E1 + NAD(+) = 15-oxoprostaglandin E1 + NADH + H(+). It catalyses the reaction 14-hydroxy-(4Z,7Z,10Z,12E,16Z,19Z)-docosahexaenoate + NAD(+) = 14-oxo-(4Z,7Z,10Z,12E,16Z,19Z)-docosahexaenoate + NADH + H(+). The catalysed reaction is resolvin E1 + NAD(+) = 18-oxo-resolvin E1 + NADH + H(+). It carries out the reaction resolvin D1 + NAD(+) = 8-oxoresolvin D1 + NADH + H(+). The enzyme catalyses resolvin D1 + NAD(+) = 17-oxoresolvin D1 + NADH + H(+). It catalyses the reaction resolvin D2 + NAD(+) = 7-oxoresolvin D2 + NADH + H(+). The catalysed reaction is resolvin D2 + NAD(+) = 16-oxoresolvin D2 + NADH + H(+). Functionally, catalyzes the NAD-dependent dehydrogenation (oxidation) of a broad array of hydroxylated polyunsaturated fatty acids (mainly eicosanoids and docosanoids, including prostaglandins, lipoxins and resolvins), yielding their corresponding keto (oxo) metabolites. Decreases the levels of the pro-proliferative prostaglandins such as prostaglandin E2 (whose activity is increased in cancer because of an increase in the expression of cyclooxygenase 2) and generates oxo-fatty acid products that can profoundly influence cell function by abrogating pro-inflammatory cytokine expression. Converts resolvins E1, D1 and D2 to their oxo products, which represents a mode of resolvin inactivation. Resolvin E1 plays important roles during the resolution phase of acute inflammation, while resolvins D1 and D2 have a unique role in obesity-induced adipose inflammation. The sequence is that of 15-hydroxyprostaglandin dehydrogenase [NAD(+)] (Hpgd) from Rattus norvegicus (Rat).